The sequence spans 417 residues: D-inositol 3-phosphate glycosyltransferase (417 aa).

Position 15 (His-15) interacts with 1D-myo-inositol 3-phosphate. UDP-N-acetyl-alpha-D-glucosamine-binding positions include 21 to 22 (QP) and Gly-29. 1D-myo-inositol 3-phosphate is bound by residues 26–31 (DAGGMN), Lys-84, Tyr-117, Thr-141, and Arg-161. UDP-N-acetyl-alpha-D-glucosamine is bound by residues Arg-241, Lys-246, and Val-299. Positions 308, 309, and 311 each coordinate Mg(2+). UDP-N-acetyl-alpha-D-glucosamine-binding residues include Glu-321 and Glu-329. Residue Thr-335 coordinates Mg(2+).

The protein belongs to the glycosyltransferase group 1 family. MshA subfamily. In terms of assembly, homodimer.

The enzyme catalyses 1D-myo-inositol 3-phosphate + UDP-N-acetyl-alpha-D-glucosamine = 1D-myo-inositol 2-acetamido-2-deoxy-alpha-D-glucopyranoside 3-phosphate + UDP + H(+). Catalyzes the transfer of a N-acetyl-glucosamine moiety to 1D-myo-inositol 3-phosphate to produce 1D-myo-inositol 2-acetamido-2-deoxy-glucopyranoside 3-phosphate in the mycothiol biosynthesis pathway. The polypeptide is D-inositol 3-phosphate glycosyltransferase (Xylanimonas cellulosilytica (strain DSM 15894 / JCM 12276 / CECT 5975 / KCTC 9989 / LMG 20990 / NBRC 107835 / XIL07)).